A 422-amino-acid polypeptide reads, in one-letter code: SPbeta prophage-derived glycosyltransferase SunS (422 aa).

Belongs to the glycosyltransferase 2 family.

Transfers a hexose moiety onto 'Cys-41' of bacteriocin sublancin-168 (SunA). Accepts UDP-glucose (UDP-Glc), UDP-N-acetylglucosamine (UDP-GlcNAc), UDP-galactose (UDP-Gal), UDP-xylose (UDP-Xyl) and GDP-mannose as substrate. This Bacillus subtilis (strain 168) protein is SPbeta prophage-derived glycosyltransferase SunS (sunS).